The sequence spans 361 residues: Phosphoserine aminotransferase (361 aa).

Residue Arg-43 coordinates L-glutamate. Pyridoxal 5'-phosphate contacts are provided by residues 77-78, Trp-103, Thr-153, Asp-172, and Gln-195; that span reads AS. At Lys-196 the chain carries N6-(pyridoxal phosphate)lysine. 237–238 is a pyridoxal 5'-phosphate binding site; the sequence is NT.

This sequence belongs to the class-V pyridoxal-phosphate-dependent aminotransferase family. SerC subfamily. Homodimer. Pyridoxal 5'-phosphate serves as cofactor.

It localises to the cytoplasm. It carries out the reaction O-phospho-L-serine + 2-oxoglutarate = 3-phosphooxypyruvate + L-glutamate. It catalyses the reaction 4-(phosphooxy)-L-threonine + 2-oxoglutarate = (R)-3-hydroxy-2-oxo-4-phosphooxybutanoate + L-glutamate. The protein operates within amino-acid biosynthesis; L-serine biosynthesis; L-serine from 3-phospho-D-glycerate: step 2/3. Its pathway is cofactor biosynthesis; pyridoxine 5'-phosphate biosynthesis; pyridoxine 5'-phosphate from D-erythrose 4-phosphate: step 3/5. Functionally, catalyzes the reversible conversion of 3-phosphohydroxypyruvate to phosphoserine and of 3-hydroxy-2-oxo-4-phosphonooxybutanoate to phosphohydroxythreonine. The chain is Phosphoserine aminotransferase from Desulfotalea psychrophila (strain LSv54 / DSM 12343).